Here is a 462-residue protein sequence, read N- to C-terminus: GTPase Der (462 aa).

EngA-type G domains lie at 9 to 171 (KTIA…GLTK) and 201 to 372 (IQVG…ECFS). Residues 15–22 (GQPNVGKS), 62–66 (DTGGM), 123–126 (NKID), 207–214 (GRVNVGKS), 254–258 (DTAGI), and 318–321 (NKWD) each bind GTP. Positions 373 to 457 (KRIPTSLLNS…PLIINAKDKK (85 aa)) constitute a KH-like domain.

Belongs to the TRAFAC class TrmE-Era-EngA-EngB-Septin-like GTPase superfamily. EngA (Der) GTPase family. In terms of assembly, associates with the 50S ribosomal subunit.

GTPase that plays an essential role in the late steps of ribosome biogenesis. This chain is GTPase Der, found in Helicobacter acinonychis (strain Sheeba).